Reading from the N-terminus, the 423-residue chain is Immunity-related GTPase family M protein 3 (423 aa).

The region spanning 83 to 260 is the IRG-type G domain; sequence YRVKIAVTGD…PELRNTLQKD (178 aa). Residues 92–99, 117–121, and 200–202 each bind GTP; these read DSGNGMSS, TGVVR, and KLD.

Belongs to the TRAFAC class dynamin-like GTPase superfamily. IRG family.

The protein resides in the endoplasmic reticulum. Its subcellular location is the cytoplasmic vesicle membrane. It localises to the lipid droplet. The enzyme catalyses GTP + H2O = GDP + phosphate + H(+). Functionally, immunity-related GTPase that plays important roles in host resistance to acute infection by protozoan, such as Toxoplasma gondii and Leishmania major. Acts as a dynamin-like protein that binds to intracellular membranes and promotes remodeling and trafficking of those membranes. Acts predominantly to restrict acute protozoan infection: expression is required in both hematopoietic and non-hematopoietic cellular compartments and is dependent on Stat1. Only plays a partial role in the control of latent Toxoplasma infection. Involved in the clearance of acute protozoan infections by regulating autophagy, possibly by promoting the fusion of phagosomes with lysosomes for efficient degradation of vacuoles containing parasites. Probably involved in membrane disruption of parasite-containing vacuoles. In addition to its role in resistance to acute infection by protozoan, also acts as a negative regulator of the integrated stress response (ISR) following coxsackievirus B3 infection. Promotes differentiation of activated CD8(+) T-cells. This chain is Immunity-related GTPase family M protein 3, found in Mus musculus (Mouse).